The following is a 328-amino-acid chain: uncharacterized protein (328 aa).

The first 32 residues, 1-32, serve as a signal peptide directing secretion; the sequence is MFNFRLFSRRGKSLGLLAIVLLLFGFYSLKSS.

This sequence belongs to the glycosyltransferase 34 family.

It is found in the endoplasmic reticulum. This is an uncharacterized protein from Schizosaccharomyces pombe (strain 972 / ATCC 24843) (Fission yeast).